The chain runs to 238 residues: 3-deoxy-D-manno-octulosonic acid kinase (238 aa).

D167 is an active-site residue.

The protein belongs to the protein kinase superfamily. KdkA/RfaP family.

The protein resides in the cell inner membrane. The enzyme catalyses an alpha-Kdo-(2-&gt;6)-lipid IVA + ATP = a 4-O-phospho-alpha-Kdo-(2-&gt;6)-lipid IVA + ADP + H(+). It functions in the pathway bacterial outer membrane biogenesis; LPS core biosynthesis. In terms of biological role, catalyzes the ATP-dependent phosphorylation of the 3-deoxy-D-manno-octulosonic acid (Kdo) residue in Kdo-lipid IV(A) at the 4-OH position. The protein is 3-deoxy-D-manno-octulosonic acid kinase of Vibrio parahaemolyticus serotype O3:K6 (strain RIMD 2210633).